Consider the following 103-residue polypeptide: Small ribosomal subunit protein uS10 (103 aa).

Belongs to the universal ribosomal protein uS10 family. In terms of assembly, part of the 30S ribosomal subunit.

In terms of biological role, involved in the binding of tRNA to the ribosomes. The protein is Small ribosomal subunit protein uS10 of Bordetella petrii (strain ATCC BAA-461 / DSM 12804 / CCUG 43448).